The sequence spans 145 residues: Allergen Sin a 1 (145 aa).

The interval 34–62 (SGSGPSWTLDDEFDFEDDMENPQGPQQRP) is disordered. Residues 40 to 54 (WTLDDEFDFEDDMEN) constitute a propeptide that is removed on maturation. Acidic residues predominate over residues 42–53 (LDDEFDFEDDME).

The protein belongs to the 2S seed storage albumins family. The protein consists of two chains linked by disulfide bonds.

Functionally, this is a 2S seed storage protein. The sequence is that of Allergen Sin a 1 from Sinapis alba (White mustard).